Here is a 153-residue protein sequence, read N- to C-terminus: Ribosome maturation factor RimP (153 aa).

The protein belongs to the RimP family.

The protein localises to the cytoplasm. In terms of biological role, required for maturation of 30S ribosomal subunits. This is Ribosome maturation factor RimP from Clostridium botulinum (strain Loch Maree / Type A3).